Here is a 330-residue protein sequence, read N- to C-terminus: Dof zinc finger protein DOF2.4 (330 aa).

Residues 14–25 (NWQQAPPSNYNH) show a composition bias toward polar residues. Residues 14-70 (NWQQAPPSNYNHDGTGASANGGHVLRPQLQPQQQPQQQPHPNGSGGGGGGGGGSIRA) are disordered. Positions 40–55 (PQLQPQQQPQQQPHPN) are enriched in low complexity. A compositionally biased stretch (gly residues) spans 56–68 (GSGGGGGGGGGSI). The Dof-type zinc finger occupies 89–143 (LKCPRCESTNTKFCYFNNYSLTQPRHFCKTCRRYWTRGGALRNVPVGGGCRRNRR). Zn(2+)-binding residues include C91, C94, C116, and C119. Disordered stretches follow at residues 133-165 (PVGG…SFSS) and 255-276 (QQSS…SANG). Low complexity predominate over residues 146-165 (SNSNNNNNSTATSNNTSFSS). A compositionally biased stretch (polar residues) spans 265 to 276 (EDSSNPNPSANG).

In terms of tissue distribution, specific to the vascular tissues. The PEAR proteins (e.g. DOF2.4, DOF5.1, DOF3.2, DOF1.1, DOF5.6 and DOF5.3) form a short-range concentration gradient that peaks at protophloem sieve elements (PSE).

The protein resides in the nucleus. The protein localises to the symplast. Transcription factor that binds specifically to a 5'-AA[AG]G-3' consensus core sequence. Probably involved in early processes for vascular development. The PEAR proteins (e.g. DOF2.4, DOF5.1, DOF3.2, DOF1.1, DOF5.6 and DOF5.3) activate gene expression that promotes radial growth of protophloem sieve elements. Triggers the transcription of HD-ZIP III genes, especially in the central domain of vascular tissue. This is Dof zinc finger protein DOF2.4 from Arabidopsis thaliana (Mouse-ear cress).